Consider the following 509-residue polypeptide: Ribonuclease Y (509 aa).

The helical transmembrane segment at 1 to 21 (MIILVAVVTAVISFGLGYVVA) threads the bilayer. Residues 199–259 (TVSTVSLPSD…IRREIARLTL (61 aa)) form the KH domain. The HD domain maps to 325–418 (VLDHSIEVAQ…VAAADALSAA (94 aa)).

Belongs to the RNase Y family.

It localises to the cell membrane. Functionally, endoribonuclease that initiates mRNA decay. The chain is Ribonuclease Y from Pseudothermotoga lettingae (strain ATCC BAA-301 / DSM 14385 / NBRC 107922 / TMO) (Thermotoga lettingae).